A 124-amino-acid chain; its full sequence is Succinate dehydrogenase cytochrome b556 subunit (124 aa).

The Cytoplasmic portion of the chain corresponds to 1 to 29 (MTKTKQEIYNKRPTSPHLSIYKLQISSTL). A helical transmembrane segment spans residues 30 to 55 (SILHRMTGVALFFAVSILAWWLILSK). Residues 56-67 (YDNNYLQFANCC) lie on the Periplasmic side of the membrane. Residues 68–88 (IIKICLVAVSYAWFYHLCNGI) traverse the membrane as a helical segment. Position 83 (H83) interacts with heme. Residues 89–103 (RHLFWDIGYGFSIKA) are Cytoplasmic-facing. The helical transmembrane segment at 104-124 (VNITGWCVVVCSILLTMLLWV) threads the bilayer.

It belongs to the cytochrome b560 family. In terms of assembly, part of an enzyme complex containing four subunits: a flavoprotein, an iron-sulfur protein, plus two membrane-anchoring proteins, SdhC and SdhD. The complex can form homotrimers. Requires heme as cofactor.

The protein resides in the cell inner membrane. The protein operates within carbohydrate metabolism; tricarboxylic acid cycle. Functionally, membrane-anchoring subunit of succinate dehydrogenase (SDH). The protein is Succinate dehydrogenase cytochrome b556 subunit (sdhC) of Rickettsia felis (strain ATCC VR-1525 / URRWXCal2) (Rickettsia azadi).